The chain runs to 884 residues: Coatomer subunit gamma-1 (884 aa).

HEAT repeat units follow at residues 65–100 (VEAT…SPSS), 101–138 (DEVI…GTLL), 286–323 (RELA…TRPL), 325–357 (VTNC…TGNE), and 358–395 (SSVD…KFPL). The disordered stretch occupies residues 592–612 (QPLQEKKAPGKKPPAGAPAPA). Residues 602-612 (KKPPAGAPAPA) show a composition bias toward pro residues.

The protein belongs to the COPG family. As to quaternary structure, oligomeric complex that consists of at least the alpha, beta, beta', gamma, delta, epsilon and zeta subunits.

It localises to the cytoplasm. The protein localises to the golgi apparatus membrane. It is found in the cytoplasmic vesicle. The protein resides in the COPI-coated vesicle membrane. In terms of biological role, the coatomer is a cytosolic protein complex that binds to dilysine motifs and reversibly associates with Golgi non-clathrin-coated vesicles, which further mediate biosynthetic protein transport from the ER, via the Golgi up to the trans Golgi network. Coatomer complex is required for budding from Golgi membranes, and is essential for the retrograde Golgi-to-ER transport of dilysine-tagged proteins. The sequence is that of Coatomer subunit gamma-1 from Oryza sativa subsp. japonica (Rice).